We begin with the raw amino-acid sequence, 186 residues long: ATP synthase subunit delta (186 aa).

It belongs to the ATPase delta chain family. As to quaternary structure, F-type ATPases have 2 components, F(1) - the catalytic core - and F(0) - the membrane proton channel. F(1) has five subunits: alpha(3), beta(3), gamma(1), delta(1), epsilon(1). F(0) has three main subunits: a(1), b(2) and c(10-14). The alpha and beta chains form an alternating ring which encloses part of the gamma chain. F(1) is attached to F(0) by a central stalk formed by the gamma and epsilon chains, while a peripheral stalk is formed by the delta and b chains.

Its subcellular location is the cell inner membrane. Its function is as follows. F(1)F(0) ATP synthase produces ATP from ADP in the presence of a proton or sodium gradient. F-type ATPases consist of two structural domains, F(1) containing the extramembraneous catalytic core and F(0) containing the membrane proton channel, linked together by a central stalk and a peripheral stalk. During catalysis, ATP synthesis in the catalytic domain of F(1) is coupled via a rotary mechanism of the central stalk subunits to proton translocation. Functionally, this protein is part of the stalk that links CF(0) to CF(1). It either transmits conformational changes from CF(0) to CF(1) or is implicated in proton conduction. The sequence is that of ATP synthase subunit delta from Brucella canis (strain ATCC 23365 / NCTC 10854 / RM-666).